Consider the following 172-residue polypeptide: Myosin regulatory light chain 2, smooth muscle minor isoform (172 aa).

S2 carries the post-translational modification N-acetylserine. Residue T19 is modified to Phosphothreonine; by MLCK. S20 carries the phosphoserine; by MLCK modification. 3 EF-hand domains span residues 29 to 64 (SQIQ…LGKN), 98 to 133 (DPED…MGDR), and 134 to 169 (FTDE…GAKD). 4 residues coordinate Ca(2+): D42, N44, D46, and D53.

In terms of assembly, myosin is a hexamer of 2 heavy chains and 4 light chains. Post-translationally, phosphorylation increases the actin-activated myosin ATPase activity and thereby regulates the contractile activity.

In terms of biological role, myosin regulatory subunit that plays an important role in regulation of both smooth muscle and nonmuscle cell contractile activity. Implicated in cytokinesis, receptor capping, and cell locomotion. This Gallus gallus (Chicken) protein is Myosin regulatory light chain 2, smooth muscle minor isoform.